The sequence spans 444 residues: Elongation factor 1-alpha (444 aa).

The region spanning 15-236 (KPHINLAVVG…VLDTFQPPPR (222 aa)) is the tr-type G domain. The segment at 24–31 (GHVDNGKS) is G1. 24–31 (GHVDNGKS) is a GTP binding site. Ser-31 lines the Mg(2+) pocket. Positions 80-84 (GVTIE) are G2. A G3 region spans residues 101 to 104 (DLPG). GTP is bound by residues 101-105 (DLPGH) and 163-166 (NKMD). The G4 stretch occupies residues 163–166 (NKMD). The interval 202 to 204 (SAI) is G5.

This sequence belongs to the TRAFAC class translation factor GTPase superfamily. Classic translation factor GTPase family. EF-Tu/EF-1A subfamily.

The protein resides in the cytoplasm. The enzyme catalyses GTP + H2O = GDP + phosphate + H(+). GTP hydrolase that promotes the GTP-dependent binding of aminoacyl-tRNA to the A-site of ribosomes during protein biosynthesis. The sequence is that of Elongation factor 1-alpha from Pyrobaculum calidifontis (strain DSM 21063 / JCM 11548 / VA1).